The chain runs to 513 residues: ATP synthase subunit alpha (513 aa).

171–178 provides a ligand contact to ATP; it reads GDRQIGKT.

The protein belongs to the ATPase alpha/beta chains family. In terms of assembly, F-type ATPases have 2 components, CF(1) - the catalytic core - and CF(0) - the membrane proton channel. CF(1) has five subunits: alpha(3), beta(3), gamma(1), delta(1), epsilon(1). CF(0) has three main subunits: a(1), b(2) and c(9-12). The alpha and beta chains form an alternating ring which encloses part of the gamma chain. CF(1) is attached to CF(0) by a central stalk formed by the gamma and epsilon chains, while a peripheral stalk is formed by the delta and b chains.

Its subcellular location is the cell membrane. It carries out the reaction ATP + H2O + 4 H(+)(in) = ADP + phosphate + 5 H(+)(out). In terms of biological role, produces ATP from ADP in the presence of a proton gradient across the membrane. The alpha chain is a regulatory subunit. In Wolbachia pipientis subsp. Culex pipiens (strain wPip), this protein is ATP synthase subunit alpha.